The chain runs to 539 residues: Gamma-2-syntrophin (539 aa).

In terms of domain architecture, PDZ spans 73–156 (TVTLRRQPVG…DVTITVEYLR (84 aa)). A PH domain is found at 296–421 (QVVHMGWVNE…WEKAFQRATF (126 aa)).

This sequence belongs to the syntrophin family. Interacts with the dystrophin protein DMD and related proteins DTNA and DTNB.

It localises to the cell membrane. Its subcellular location is the sarcolemma. The protein localises to the cytoplasm. The protein resides in the cytoskeleton. Its function is as follows. Adapter protein that binds to and probably organizes the subcellular localization of a variety of proteins. May link various receptors to the actin cytoskeleton and the dystrophin glycoprotein complex. The chain is Gamma-2-syntrophin (Sntg2) from Mus musculus (Mouse).